The chain runs to 415 residues: 6-phospho-beta-glucosidase BglT (415 aa).

Met-1 to Thr-64 is a binding site for NAD(+). The substrate site is built by Arg-87 and Asn-140. Cys-162 is a binding site for Mn(2+). Asn-163 provides a ligand contact to substrate. His-192 lines the Mn(2+) pocket. Tyr-241 acts as the Proton acceptor in catalysis. Arg-261 lines the substrate pocket.

Belongs to the glycosyl hydrolase 4 family. Homodimer or homotetramer. Exists in a homodimer/homotetramer equilibrium state in solution. NAD(+) is required as a cofactor. Mn(2+) serves as cofactor.

It carries out the reaction 6-phospho-beta-D-glucosyl-(1-&gt;4)-D-glucose + H2O = D-glucose 6-phosphate + D-glucose. Functionally, hydrolyzes cellobiose 6'-phosphate into glucose 6-phosphate (Glc6P) and glucose. This Thermotoga maritima (strain ATCC 43589 / DSM 3109 / JCM 10099 / NBRC 100826 / MSB8) protein is 6-phospho-beta-glucosidase BglT (bglT).